A 1498-amino-acid chain; its full sequence is Golgin subfamily A member 3 (1498 aa).

Methionine 1 is subject to N-acetylmethionine. The disordered stretch occupies residues methionine 1 to lysine 118. Serine 18 carries the post-translational modification Phosphoserine. A compositionally biased stretch (pro residues) spans proline 27 to proline 36. Serine 57 bears the Phosphoserine mark. Over residues proline 71–serine 81 the composition is skewed to pro residues. An interaction with GOPC region spans residues leucine 121–proline 141. 2 disordered regions span residues arginine 166–proline 195 and serine 216–threonine 325. Residues glutamate 172–glycine 257 are golgi-targeting domain. Composition is skewed to polar residues over residues arginine 173 to phenylalanine 184 and threonine 269 to proline 291. Position 272 is a phosphoserine (serine 272). Residues serine 315 to serine 324 are compositionally biased toward low complexity. A phosphoserine mark is found at serine 385, serine 389, and serine 465. Positions valine 394–serine 1459 form a coiled coil. Positions lysine 789–glutamate 801 are enriched in basic and acidic residues. 4 disordered regions span residues lysine 789–threonine 809, glutamine 974–lysine 993, arginine 1376–isoleucine 1400, and aspartate 1440–glutamate 1498. Position 983 is a phosphoserine (serine 983). The span at arginine 1376–glycine 1387 shows a compositional bias: basic and acidic residues. At serine 1392 the chain carries Phosphoserine. Basic and acidic residues predominate over residues aspartate 1440–threonine 1452.

As to quaternary structure, homodimer. Interacts with GOLGA7. Isoform 1 interacts with GOPC while isoform 3 does not. Post-translationally, cleaved by caspases in apoptotic cells. As to expression, expressed in all tissues tested. Expressed in liver, testis, lung, heart, salivary gland and kidney.

It localises to the cytoplasm. The protein resides in the golgi apparatus. The protein localises to the golgi stack membrane. Golgi auto-antigen; probably involved in maintaining Golgi structure. In Homo sapiens (Human), this protein is Golgin subfamily A member 3 (GOLGA3).